The following is a 319-amino-acid chain: MNQGKRVGIIGAGNVGATVAYSLAMLGSCHEIILRDNKIDVAKGKALDMSQAAAAVRSHTIVSVAEEMADLTNCDVVVVTAGSPRLPGMSRDDLLMINANITKDVIAGVAKYSPDAIIIMVSNPLDAMTYVALKESGFDRSRVIGMAGILDSARMASFIQEKLGYGGGQIRASVMGGHGDDMVPLARYSTVAGVPLTDLMSTSEINEIVIRTRNGGAEIVGHLKTGSAYYAPAKATALMVEAILKDTKQIHPCAVFLEGEYGHSDVVSGVPVMLGANGAEKIIEISLDESEKIMFEGSCNSVRTLIDTLNKNKFFDKGE.

NAD(+) is bound by residues 11 to 16 and aspartate 36; that span reads GAGNVG. The substrate site is built by arginine 85 and arginine 91. Residues asparagine 98 and 121-123 each bind NAD(+); that span reads VSN. The substrate site is built by asparagine 123 and arginine 154. The active-site Proton acceptor is histidine 178.

Belongs to the LDH/MDH superfamily. MDH type 3 family.

It catalyses the reaction (S)-malate + NAD(+) = oxaloacetate + NADH + H(+). Functionally, catalyzes the reversible oxidation of malate to oxaloacetate. This chain is Malate dehydrogenase, found in Sulfurimonas denitrificans (strain ATCC 33889 / DSM 1251) (Thiomicrospira denitrificans (strain ATCC 33889 / DSM 1251)).